Reading from the N-terminus, the 351-residue chain is MYSLARPFLFSLDAERAHALALRSIDTAYRTGTTALLARRPVPLPTPAFGLIFPNPVGLGAGLDKNGEHIDALFALGFGFVEIGTVTPRAQEGNPKPRMFRLPEYQAVINRMGFNNLGVDALVANVQRARRTGGLLGINIGKNKDTPNEEATSDYRYCMERVYPLADYITVNISSPNTAGLRELQEEQSLRRLISDLRETQEVLSAPHGKRVPMLVKVAPDLNDRDIDAAARVLADLAVDGVIATNTTVTRTLVANHPLAAEAGGLSGAPLLGQSTLVLRRLRARLPESIPLIGVGGINSGADAVAKMAAGASLVQCYSGLVYRGPQLIGECVNAIRRRREAPSGGAVSPL.

Residues 61 to 65 and threonine 85 contribute to the FMN site; that span reads AGLDK. Residue lysine 65 participates in substrate binding. 110 to 114 is a binding site for substrate; sequence NRMGF. 2 residues coordinate FMN: asparagine 139 and asparagine 172. Asparagine 172 provides a ligand contact to substrate. Serine 175 (nucleophile) is an active-site residue. Asparagine 177 is a binding site for substrate. Residues lysine 217 and threonine 245 each coordinate FMN. Residue 246-247 coordinates substrate; sequence NT. FMN is bound by residues glycine 268, glycine 297, and 318 to 319; that span reads YS.

The protein belongs to the dihydroorotate dehydrogenase family. Type 2 subfamily. Monomer. FMN serves as cofactor.

It is found in the cell membrane. The enzyme catalyses (S)-dihydroorotate + a quinone = orotate + a quinol. It participates in pyrimidine metabolism; UMP biosynthesis via de novo pathway; orotate from (S)-dihydroorotate (quinone route): step 1/1. Catalyzes the conversion of dihydroorotate to orotate with quinone as electron acceptor. The protein is Dihydroorotate dehydrogenase (quinone) of Xanthomonas euvesicatoria pv. vesicatoria (strain 85-10) (Xanthomonas campestris pv. vesicatoria).